Here is a 404-residue protein sequence, read N- to C-terminus: Probable tRNA sulfurtransferase (404 aa).

The 106-residue stretch at 60–165 folds into the THUMP domain; sequence EPVAEALKNV…DEAAYISHEE (106 aa). Residues 183 to 184, 208 to 209, Arg-265, Gly-287, and Gln-296 each bind ATP; these read ML and HF.

Belongs to the ThiI family.

The protein resides in the cytoplasm. The catalysed reaction is [ThiI sulfur-carrier protein]-S-sulfanyl-L-cysteine + a uridine in tRNA + 2 reduced [2Fe-2S]-[ferredoxin] + ATP + H(+) = [ThiI sulfur-carrier protein]-L-cysteine + a 4-thiouridine in tRNA + 2 oxidized [2Fe-2S]-[ferredoxin] + AMP + diphosphate. The enzyme catalyses [ThiS sulfur-carrier protein]-C-terminal Gly-Gly-AMP + S-sulfanyl-L-cysteinyl-[cysteine desulfurase] + AH2 = [ThiS sulfur-carrier protein]-C-terminal-Gly-aminoethanethioate + L-cysteinyl-[cysteine desulfurase] + A + AMP + 2 H(+). Its pathway is cofactor biosynthesis; thiamine diphosphate biosynthesis. Its function is as follows. Catalyzes the ATP-dependent transfer of a sulfur to tRNA to produce 4-thiouridine in position 8 of tRNAs, which functions as a near-UV photosensor. Also catalyzes the transfer of sulfur to the sulfur carrier protein ThiS, forming ThiS-thiocarboxylate. This is a step in the synthesis of thiazole, in the thiamine biosynthesis pathway. The sulfur is donated as persulfide by IscS. The protein is Probable tRNA sulfurtransferase of Streptococcus uberis (strain ATCC BAA-854 / 0140J).